Reading from the N-terminus, the 388-residue chain is tRNA-specific adenosine deaminase 1 (388 aa).

The A to I editase domain occupies 63–388 (CLATGVKCTP…PNGGNEFQWI (326 aa)). His-89 is a Zn(2+) binding site. The active-site Proton donor is the Glu-91. Arg-96 serves as a coordination point for 1D-myo-inositol hexakisphosphate. The Zn(2+) site is built by Cys-144 and Cys-201. Positions 204, 357, and 363 each coordinate 1D-myo-inositol hexakisphosphate.

It belongs to the ADAT1 family. The cofactor is 1D-myo-inositol hexakisphosphate. It depends on Zn(2+) as a cofactor.

It localises to the cytoplasm. The protein resides in the nucleus. It catalyses the reaction adenosine(37) in tRNA(Ala) + H2O + H(+) = inosine(37) in tRNA(Ala) + NH4(+). Deaminates adenosine-37 to inosine in tRNA-Ala. The protein is tRNA-specific adenosine deaminase 1 of Schizosaccharomyces pombe (strain 972 / ATCC 24843) (Fission yeast).